Consider the following 194-residue polypeptide: Factor in the germline alpha (194 aa).

A bHLH domain is found at 59 to 111; sequence ERRRVANAKERERIKNLNRGFAKLKALVPFLPQSRKPSKVDILKGATEYIQIL. Over residues 121–137 the composition is skewed to basic and acidic residues; it reads SEKQSPEEQTHSGRPSD. The disordered stretch occupies residues 121–163; it reads SEKQSPEEQTHSGRPSDPHVSSTRELLGNATQPTSCASGLKKE. Over residues 139–157 the composition is skewed to polar residues; that stretch reads HVSSTRELLGNATQPTSCA.

Heterodimer with TCF3/isoform E12. In terms of tissue distribution, expressed only in the oocytes within the ovary and at lower level in the testis. Found in the resting oocytes of the primordial follicle cells, at the periphery of the ovary and in the hilar region. Also detected in growing oocytes, but at lower levels.

It is found in the nucleus. Functionally, germ-line specific transcription factor implicated in postnatal oocyte-specific gene expression. Plays a key regulatory role in the expression of multiple oocyte-specific genes, including those that initiate folliculogenesis and those that encode the zona pellucida (ZP1, ZP2 and ZP3) required for fertilization and early embryonic survival. Essential for oocytes to survive and form primordial follicles. The persistence of FIGLA in adult females suggests that it may regulate additional pathways that are essential for normal ovarian development. Binds to the E-box (5'-CANNTG-3') of the ZPs (ZP1, ZP2, ZP3) promoters. In Mus musculus (Mouse), this protein is Factor in the germline alpha (Figla).